The following is an 833-amino-acid chain: Probable glucan 1,3-beta-glucosidase D (833 aa).

Positions 1–33 are enriched in basic and acidic residues; the sequence is MPTHSRSRDRYGGRDSDREARYDYDYARRRYAT. The tract at residues 1–228 is disordered; it reads MPTHSRSRDR…RKRQKKLAVV (228 aa). Over 1–305 the chain is Cytoplasmic; that stretch reads MPTHSRSRDR…GGRPFWKRKR (305 aa). Over residues 34-45 the composition is skewed to acidic residues; sequence DDDDDYDDDELE. Basic and acidic residues-rich tracts occupy residues 46 to 75 and 97 to 172; these read HDLT…RDAE and YGDD…ETAA. Residues 183 to 196 are compositionally biased toward low complexity; sequence SASHLLSADALAKL. The segment covering 200–217 has biased composition (basic and acidic residues); sequence YEKEERRKREIAKDAAKA. The helical; Signal-anchor for type II membrane protein transmembrane segment at 306–326 threads the bilayer; it reads WIGLGALIIILVIVIPVAVVV. Residues 327 to 833 lie on the Extracellular side of the membrane; the sequence is SKKHDNKSDP…PDFGDLPEYY (507 aa). Residues 331-353 are disordered; sequence DNKSDPADSQGTSPGKSNLDGLS. Residue asparagine 332 is glycosylated (N-linked (GlcNAc...) asparagine). Polar residues predominate over residues 337–346; sequence ADSQGTSPGK. Residues asparagine 378, asparagine 383, asparagine 395, asparagine 548, asparagine 560, and asparagine 569 are each glycosylated (N-linked (GlcNAc...) asparagine). Residue glutamate 599 is the Proton donor of the active site. N-linked (GlcNAc...) asparagine glycans are attached at residues asparagine 638, asparagine 671, and asparagine 691. Glutamate 704 acts as the Nucleophile in catalysis.

The protein belongs to the glycosyl hydrolase 5 (cellulase A) family.

The protein localises to the cell membrane. It carries out the reaction Successive hydrolysis of beta-D-glucose units from the non-reducing ends of (1-&gt;3)-beta-D-glucans, releasing alpha-glucose.. Functionally, glucosidase involved in the degradation of cellulosic biomass. Active on lichenan. The protein is Probable glucan 1,3-beta-glucosidase D (exgD) of Aspergillus fumigatus (strain CBS 144.89 / FGSC A1163 / CEA10) (Neosartorya fumigata).